A 755-amino-acid polypeptide reads, in one-letter code: Bacteriophytochrome (755 aa).

Position 24 (Cys24) interacts with a tetrapyrrole. Residues 26–94 (REPIHIPGSI…LQAALPPGCP (69 aa)) enclose the PAS domain. The interval 95-504 (DALQYRATLD…RDTLTGALGE (410 aa)) is chromophore binding domain. The region spanning 152 to 316 (NLRALAEVAT…YLGRLLSLQV (165 aa)) is the GAF domain. Residues 529–747 (VISHHMQEPV…TFRCWLPDAG (219 aa)) form the Histidine kinase domain. Phosphohistidine; by autocatalysis is present on His532.

The protein in the N-terminal section; belongs to the phytochrome family. In terms of processing, contains one covalently linked tetrapyrrole chromophore. Lacks the cysteine conserved in plant phytochromes (at the position of Met-259) that binds chromophore. An engineered sequence used for X-ray crystallography forms a thioether link to biliverdin through Cys-24. The natural sequence can bind phycocyanobilin and phytochromobilin in vitro, but the identity of the natural chromophore is unknown.

It carries out the reaction ATP + protein L-histidine = ADP + protein N-phospho-L-histidine.. Functionally, photoreceptor which exists in two forms that are reversibly interconvertible by light: the R form that absorbs maximally in the red region of the spectrum and the FR form that absorbs maximally in the far-red region. Also has a slight blue shift for the far-red maximum. Could also absorb green light. May participate in regulating pigment synthesis like the carotenoid deinoxanthin which could protect the bacterium from intense visible light. The polypeptide is Bacteriophytochrome (bphP) (Deinococcus radiodurans (strain ATCC 13939 / DSM 20539 / JCM 16871 / CCUG 27074 / LMG 4051 / NBRC 15346 / NCIMB 9279 / VKM B-1422 / R1)).